The following is a 319-amino-acid chain: HTH-type transcriptional regulator YidZ (319 aa).

Residues 8–65 (LDLNLLLCLQLLMQERSVTKAAKRMNVTPSAVSKSLAKLRAWFDDPLFVNSPLGLSPT) enclose the HTH lysR-type domain. Residues 25 to 44 (VTKAAKRMNVTPSAVSKSLA) constitute a DNA-binding region (H-T-H motif).

This sequence belongs to the LysR transcriptional regulatory family.

Its function is as follows. Involved in anaerobic NO protection. This is HTH-type transcriptional regulator YidZ from Escherichia coli O6:H1 (strain CFT073 / ATCC 700928 / UPEC).